A 392-amino-acid polypeptide reads, in one-letter code: Succinate--CoA ligase [ADP-forming] subunit beta (392 aa).

The ATP-grasp domain maps to lysine 9–glutamate 248. ATP-binding positions include lysine 50, glycine 57–glycine 59, glutamate 103, methionine 106, and glutamate 111. Mg(2+) is bound by residues asparagine 203 and aspartate 217. Substrate is bound by residues asparagine 268 and glycine 325–valine 327.

It belongs to the succinate/malate CoA ligase beta subunit family. In terms of assembly, heterotetramer of two alpha and two beta subunits. Mg(2+) is required as a cofactor.

It catalyses the reaction succinate + ATP + CoA = succinyl-CoA + ADP + phosphate. It carries out the reaction GTP + succinate + CoA = succinyl-CoA + GDP + phosphate. The protein operates within carbohydrate metabolism; tricarboxylic acid cycle; succinate from succinyl-CoA (ligase route): step 1/1. Its function is as follows. Succinyl-CoA synthetase functions in the citric acid cycle (TCA), coupling the hydrolysis of succinyl-CoA to the synthesis of either ATP or GTP and thus represents the only step of substrate-level phosphorylation in the TCA. The beta subunit provides nucleotide specificity of the enzyme and binds the substrate succinate, while the binding sites for coenzyme A and phosphate are found in the alpha subunit. This Chlorobium phaeobacteroides (strain DSM 266 / SMG 266 / 2430) protein is Succinate--CoA ligase [ADP-forming] subunit beta.